Reading from the N-terminus, the 268-residue chain is Probable chemotaxis protein methyltransferase (268 aa).

Residues 1 to 262 (MIYSDAGIFL…GITTYRYTTK (262 aa)) enclose the CheR-type methyltransferase domain. Residues Asn-60, Thr-62, Arg-66, Glu-104, Asp-130, 188 to 189 (NL), and 205 to 206 (RN) contribute to the S-adenosyl-L-methionine site.

The catalysed reaction is L-glutamyl-[protein] + S-adenosyl-L-methionine = [protein]-L-glutamate 5-O-methyl ester + S-adenosyl-L-homocysteine. Functionally, methylation of the membrane-bound methyl-accepting chemotaxis proteins (MCP) to form gamma-glutamyl methyl ester residues in MCP. The chain is Probable chemotaxis protein methyltransferase (cheRch1) from Rhizobium etli (strain ATCC 51251 / DSM 11541 / JCM 21823 / NBRC 15573 / CFN 42).